Consider the following 329-residue polypeptide: Phospho-N-acetylmuramoyl-pentapeptide-transferase (329 aa).

Helical transmembrane passes span 1 to 21 (MLLNGIVAAVITMIITIIGIP), 53 to 73 (MGGFVFVVVSLVVSLVAALVF), 76 to 96 (FSPAFITAWWVFAMYAVIGFL), 109 to 129 (GLTAKQKMLAQILIGIVSYFI), 141 to 161 (ILSWQVNIGIFFSIFIIIWLV), 175 to 195 (GLASITVAISLTAYAVIAVVH), 198 to 218 (YDVLLIILSVIGGLLGFFVFN), 237 to 257 (FLAIVSILLHAEWTLLLIGAV), and 309 to 329 (IVFWLFTAVLSVIALCIYFAF).

The protein belongs to the glycosyltransferase 4 family. MraY subfamily. Mg(2+) is required as a cofactor.

Its subcellular location is the cell membrane. It catalyses the reaction UDP-N-acetyl-alpha-D-muramoyl-L-alanyl-gamma-D-glutamyl-L-lysyl-D-alanyl-D-alanine + di-trans,octa-cis-undecaprenyl phosphate = Mur2Ac(oyl-L-Ala-gamma-D-Glu-L-Lys-D-Ala-D-Ala)-di-trans,octa-cis-undecaprenyl diphosphate + UMP. The protein operates within cell wall biogenesis; peptidoglycan biosynthesis. Catalyzes the initial step of the lipid cycle reactions in the biosynthesis of the cell wall peptidoglycan: transfers peptidoglycan precursor phospho-MurNAc-pentapeptide from UDP-MurNAc-pentapeptide onto the lipid carrier undecaprenyl phosphate, yielding undecaprenyl-pyrophosphoryl-MurNAc-pentapeptide, known as lipid I. The chain is Phospho-N-acetylmuramoyl-pentapeptide-transferase from Lactococcus lactis subsp. cremoris (strain SK11).